A 619-amino-acid polypeptide reads, in one-letter code: Dihydroxy-acid dehydratase (619 aa).

Asp-81 contributes to the Mg(2+) binding site. Cys-122 provides a ligand contact to [2Fe-2S] cluster. 2 residues coordinate Mg(2+): Asp-123 and Lys-124. An N6-carboxylysine modification is found at Lys-124. Residue Cys-195 participates in [2Fe-2S] cluster binding. Glu-494 is a binding site for Mg(2+). Ser-520 (proton acceptor) is an active-site residue.

The protein belongs to the IlvD/Edd family. In terms of assembly, homodimer. The cofactor is [2Fe-2S] cluster. Mg(2+) is required as a cofactor.

It catalyses the reaction (2R)-2,3-dihydroxy-3-methylbutanoate = 3-methyl-2-oxobutanoate + H2O. The enzyme catalyses (2R,3R)-2,3-dihydroxy-3-methylpentanoate = (S)-3-methyl-2-oxopentanoate + H2O. It participates in amino-acid biosynthesis; L-isoleucine biosynthesis; L-isoleucine from 2-oxobutanoate: step 3/4. It functions in the pathway amino-acid biosynthesis; L-valine biosynthesis; L-valine from pyruvate: step 3/4. Its function is as follows. Functions in the biosynthesis of branched-chain amino acids. Catalyzes the dehydration of (2R,3R)-2,3-dihydroxy-3-methylpentanoate (2,3-dihydroxy-3-methylvalerate) into 2-oxo-3-methylpentanoate (2-oxo-3-methylvalerate) and of (2R)-2,3-dihydroxy-3-methylbutanoate (2,3-dihydroxyisovalerate) into 2-oxo-3-methylbutanoate (2-oxoisovalerate), the penultimate precursor to L-isoleucine and L-valine, respectively. The protein is Dihydroxy-acid dehydratase of Shewanella denitrificans (strain OS217 / ATCC BAA-1090 / DSM 15013).